A 364-amino-acid chain; its full sequence is Lysophosphatidic acid receptor 1 (364 aa).

The Extracellular portion of the chain corresponds to 1–50 (MAAISTSIPVISQPQFTAMNEPQCFYNESIAFFYNRSGKHLATEWNTVSK). Cystine bridges form between Cys24–Cys190 and Cys188–Cys195. N-linked (GlcNAc...) asparagine glycans are attached at residues Asn27 and Asn35. Residue Lys39 participates in a 1-acyl-sn-glycero-3-phosphate binding. Residues 51–75 (LVMGLGITVCIFIMLANLLVMVAIY) form a helical membrane-spanning segment. At 76-83 (VNRRFHFP) the chain is on the cytoplasmic side. Residues 84 to 107 (IYYLMANLAAADFFAGLAYFYLMF) form a helical membrane-spanning segment. The Extracellular segment spans residues 108–121 (NTGPNTRRLTVSTW). The helical transmembrane segment at 122–144 (LLRQGLIDTSLTASVANLLAIAI) threads the bilayer. 124–129 (RQGLID) contacts a 1-acyl-sn-glycero-3-phosphate. The Cytoplasmic segment spans residues 145 to 163 (ERHITVFRMQLHTRMSNRR). The chain crosses the membrane as a helical span at residues 164–184 (VVVVIVVIWTMAIVMGAIPSV). Topologically, residues 185 to 204 (GWNCICDIENCSNMAPLYSD) are extracellular. The helical transmembrane segment at 205–225 (SYLVFWAIFNLVTFVVMVVLY) threads the bilayer. Trp210 is an a 1-acyl-sn-glycero-3-phosphate binding site. Over 226–255 (AHIFGYVRQRTMRMSRHSSGPRRNRDTMMS) the chain is Cytoplasmic. Residues 256 to 280 (LLKTVVIVLGAFIICWTPGLVLLLL) form a helical membrane-spanning segment. Over 281–294 (DVCCPQCDVLAYEK) the chain is Extracellular. A disulfide bridge links Cys284 with Cys287. Residues 295 to 315 (FFLLLAEFNSAMNPIIYSYRD) traverse the membrane as a helical segment. Residues 316–364 (KEMSATFRQILCCQRSENPTGPTEGSDRSASSLNHTILAGVHSNDHSVV) are Cytoplasmic-facing. Ser341 carries the post-translational modification Phosphoserine. Residue Thr351 is modified to Phosphothreonine.

Belongs to the G-protein coupled receptor 1 family. As to quaternary structure, interacts with RALA and GRK2. Interacts with GNAQ and GNA13. Interacts with CD14; the interaction is enhanced by exposure to bacterial lipopolysaccharide (LPS). Post-translationally, N-glycosylated. As to expression, expressed in many adult organs, including brain, heart, colon, small intestine, placenta, prostate, ovary, pancreas, testes, spleen, skeletal muscle, and kidney. Little or no expression in liver, lung, thymus, or peripheral blood leukocytes. Detected in lung fibroblasts from bronchoalveolar fluid from patients with idiopathic pulmonary fibrosis. Detected in bone marrow-derived mesenchymal stem cells.

It is found in the cell surface. Its subcellular location is the cell membrane. It localises to the endosome. Receptor for lysophosphatidic acid (LPA). Plays a role in the reorganization of the actin cytoskeleton, cell migration, differentiation and proliferation, and thereby contributes to the responses to tissue damage and infectious agents. Activates downstream signaling cascades via the G(i)/G(o), G(12)/G(13), and G(q) families of heteromeric G proteins. Signaling inhibits adenylyl cyclase activity and decreases cellular cAMP levels. Signaling triggers an increase of cytoplasmic Ca(2+) levels. Activates RALA; this leads to the activation of phospholipase C (PLC) and the formation of inositol 1,4,5-trisphosphate. Signaling mediates activation of down-stream MAP kinases. Contributes to the regulation of cell shape. Promotes Rho-dependent reorganization of the actin cytoskeleton in neuronal cells and neurite retraction. Promotes the activation of Rho and the formation of actin stress fibers. Promotes formation of lamellipodia at the leading edge of migrating cells via activation of RAC1. Through its function as LPA receptor, plays a role in chemotaxis and cell migration, including responses to injury and wounding. Plays a role in triggering inflammation in response to bacterial lipopolysaccharide (LPS) via its interaction with CD14. Promotes cell proliferation in response to LPA. Inhibits the intracellular ciliogenesis pathway in response to LPA and through AKT1 activation. Required for normal skeleton development. May play a role in osteoblast differentiation. Required for normal brain development. Required for normal proliferation, survival and maturation of newly formed neurons in the adult dentate gyrus. Plays a role in pain perception and in the initiation of neuropathic pain. This Homo sapiens (Human) protein is Lysophosphatidic acid receptor 1 (LPAR1).